The sequence spans 116 residues: FK506-binding protein 1 (116 aa).

The 98-residue stretch at 19 to 116 folds into the PPIase FKBP-type domain; it reads GDKVSIHYTG…IFEVELLKIN (98 aa).

The protein belongs to the FKBP-type PPIase family. FKBP1 subfamily.

The protein localises to the cytoplasm. The catalysed reaction is [protein]-peptidylproline (omega=180) = [protein]-peptidylproline (omega=0). Its activity is regulated as follows. Inhibited by both FK506 and rapamycin. Its function is as follows. PPIases accelerate the folding of proteins. It catalyzes the cis-trans isomerization of proline imidic peptide bonds in oligopeptides. The polypeptide is FK506-binding protein 1 (fpr1) (Aspergillus oryzae (strain ATCC 42149 / RIB 40) (Yellow koji mold)).